A 436-amino-acid polypeptide reads, in one-letter code: Methanethiol oxidase (436 aa).

The N-terminal stretch at 1 to 24 is a signal peptide; the sequence is MKRREFGALAAGALAMGLPFRAFA.

Belongs to the selenium-binding protein family.

The protein resides in the periplasm. It catalyses the reaction methanethiol + O2 + H2O = hydrogen sulfide + formaldehyde + H2O2 + H(+). Its pathway is organosulfur degradation. Catalyzes the oxidation of methanethiol. The sequence is that of Methanethiol oxidase from Ruegeria pomeroyi (strain ATCC 700808 / DSM 15171 / DSS-3) (Silicibacter pomeroyi).